The following is a 352-amino-acid chain: Tubby-like F-box protein 10 (352 aa).

Positions 1 to 11 (MAAVREPREEA) are enriched in basic and acidic residues. The tract at residues 1-23 (MAAVREPREEAAVGEGEGEEEGR) is disordered. Residues 22 to 78 (GRWGGLLPELVEEVVRRVEASGGERWPARKDLVSCACVCRRWREAAAAVVRPLPESG) form the F-box domain.

The protein belongs to the TUB family. Ubiquitous.

The sequence is that of Tubby-like F-box protein 10 (TULP10) from Oryza sativa subsp. japonica (Rice).